A 316-amino-acid polypeptide reads, in one-letter code: Transaldolase 2 (316 aa).

The Schiff-base intermediate with substrate role is filled by Lys-131.

It belongs to the transaldolase family. Type 1 subfamily. Homodimer.

Its subcellular location is the cytoplasm. The enzyme catalyses D-sedoheptulose 7-phosphate + D-glyceraldehyde 3-phosphate = D-erythrose 4-phosphate + beta-D-fructose 6-phosphate. It functions in the pathway carbohydrate degradation; pentose phosphate pathway; D-glyceraldehyde 3-phosphate and beta-D-fructose 6-phosphate from D-ribose 5-phosphate and D-xylulose 5-phosphate (non-oxidative stage): step 2/3. Functionally, transaldolase is important for the balance of metabolites in the pentose-phosphate pathway. This is Transaldolase 2 from Shigella sonnei (strain Ss046).